Here is a 279-residue protein sequence, read N- to C-terminus: Large ribosomal subunit protein uL3 (279 aa).

Glutamine 151 bears the N5-methylglutamine mark.

Belongs to the universal ribosomal protein uL3 family. As to quaternary structure, part of the 50S ribosomal subunit. Forms a cluster with proteins L14 and L19. In terms of processing, methylated by PrmB.

One of the primary rRNA binding proteins, it binds directly near the 3'-end of the 23S rRNA, where it nucleates assembly of the 50S subunit. This is Large ribosomal subunit protein uL3 from Dinoroseobacter shibae (strain DSM 16493 / NCIMB 14021 / DFL 12).